The following is a 371-amino-acid chain: Proton-coupled zinc antiporter SLC30A2 (371 aa).

Over 1–69 (MQTMDKQNLL…DPEKQRARRK (69 aa)) the chain is Cytoplasmic. The short motif at 47–50 (HYCH) is the Mitochondrial localization signal element. C49 provides a ligand contact to Zn(2+). A helical membrane pass occupies residues 70–90 (LYVASAICLVFMIGEIIGGYL). The Lumenal portion of the chain corresponds to 91–99 (AQSLAIMTD). Residues 100-120 (AAHLLTDFASMLISLFALWVS) traverse the membrane as a helical segment. Zn(2+)-binding residues include H102 and D106. Topologically, residues 121–136 (SRPATKTMNFGWHRAE) are cytoplasmic. Residues 137–157 (ILGALLSVLSIWVVTGVLVYL) form a helical membrane-spanning segment. The Lumenal segment spans residues 158–172 (AVQRLISGDYEIKGD). A helical membrane pass occupies residues 173–193 (TMLITSGCAVAVNLIMGLALH). The Cytoplasmic segment spans residues 194–219 (QSGHGHSHGNSRDDSSQQQNPSVRAA). A helical membrane pass occupies residues 220 to 240 (FIHVIGDLLQSVGVLVAAYII). Zn(2+) is bound by residues H222 and D226. At 241–248 (YFKPEYKY) the chain is on the lumenal side. Residues 249–269 (VDPICTFLFSILVLGTTLTIL) form a helical membrane-spanning segment. Over 270–303 (RDVILVLMEGTPKGVDFTTVKNLLLSVDGVEALH) the chain is Cytoplasmic. The Lysosomal targeting motif signature appears at 293–294 (LL). Residue S295 is modified to Phosphoserine. H303, H320, and E354 together coordinate Zn(2+). Residues 304-324 (SLHIWALTVAQPVLSVHIAIA) form a helical membrane-spanning segment. Topologically, residues 325–371 (QNADAQAVLKVARDRLQGKFNFHTMTIQIEKYSEDMKNCQACQGPLE) are lumenal.

Belongs to the cation diffusion facilitator (CDF) transporter (TC 2.A.4) family. SLC30A subfamily. As to quaternary structure, homodimer. Interacts (via lysosomal targeting motif) with AP3D1; in AP-3-mediated transport to lysosomes. Interacts with TMEM163. In terms of processing, phosphorylated at Ser-295. Phosphorylation at Ser-295 prevents localization to lysosomes. Dephosphorylation of Ser-295 which triggers localization to lysosomes, accumulation of zinc into lysosomes and lysosomal-mediated cell death is induced by TNF-alpha.

The protein localises to the cytoplasmic vesicle. It is found in the secretory vesicle membrane. The protein resides in the zymogen granule membrane. Its subcellular location is the endosome membrane. It localises to the lysosome membrane. The protein localises to the mitochondrion inner membrane. It is found in the cell membrane. The catalysed reaction is Zn(2+)(in) + 2 H(+)(out) = Zn(2+)(out) + 2 H(+)(in). Its function is as follows. Electroneutral proton-coupled antiporter concentrating zinc ions into a variety of intracellular organelles including endosomes, zymogen granules and mitochondria. Thereby, plays a crucial role in cellular zinc homeostasis to confer upon cells protection against its potential cytotoxicity. Regulates the zinc concentration of milk, through the transport of zinc ions into secretory vesicles of mammary cells. By concentrating zinc ions into lysosomes participates to lysosomal-mediated cell death during early mammary gland involution. In terms of biological role, electroneutral proton-coupled antiporter mediating the efflux of zinc ions through the plasma membrane. The chain is Proton-coupled zinc antiporter SLC30A2 from Mus musculus (Mouse).